Here is a 380-residue protein sequence, read N- to C-terminus: MARTGALLLAALALAGCAQACIYKFGTSPDSKATHTGDHWDHSLNGENWEGKDGAGNPWVCKTGRKQSPINVPQYHVLDGKGSKIATGLQTQWSYPDLMSNGSSVQVINNGHTIQVQWTYDYAGHATIAIPAMRNQSNRIVDVLEMRPNDASDRVTAVPTQFHFHSTSEHLLAGKIFPLELHIVHKVTDKLEACKGGCFSVTGILFQLDNGPDNELLEPIFANMPTREGTFTNLPAGTTIKLGELLPSDRDYVTYEGSLTTPPCSEGLLWHVMTQPQRISFGQWNRYRLAVGEKECNSTETDAAHADAGHHHHHHRRLLHNHAHLEEVPAATSEPKHYFRRVMEETENPDAYTCTTVAFGQNFRNAQYANGRTIKLARYE.

A signal peptide spans 1–20; that stretch reads MARTGALLLAALALAGCAQA. Residues 38–322 form the Alpha-carbonic anhydrase domain; sequence DHWDHSLNGE…HHHRRLLHNH (285 aa). Cystine bridges form between C61-C264, C194-C198, and C296-C354. N101 carries N-linked (GlcNAc...) asparagine glycosylation. The active-site Proton acceptor is the H112. A glycan (N-linked (GlcNAc...) asparagine) is linked at N135. The Zn(2+) site is built by H163, H165, and H182. Residue 260–261 coordinates substrate; it reads TT. N297 is a glycosylation site (N-linked (GlcNAc...) asparagine).

It belongs to the alpha-carbonic anhydrase family. In terms of assembly, tetramer of two large and two small subunits linked by two disulfide bonds. Zn(2+) is required as a cofactor.

Its subcellular location is the periplasm. It catalyses the reaction hydrogencarbonate + H(+) = CO2 + H2O. Functionally, reversible hydration of carbon dioxide. In Chlamydomonas reinhardtii (Chlamydomonas smithii), this protein is Carbonic anhydrase 2 (CAH2).